The sequence spans 370 residues: Glutathione S-transferase omega-like 2 (370 aa).

Arg15 serves as a coordination point for glutathione. Cys46 functions as the Nucleophile in the catalytic mechanism. 5 residues coordinate glutathione: Trp79, Arg155, Val158, Glu173, and Ser174. A GST C-terminal domain is found at 201-353 (PAQLKTQIDD…LHYTRSHTRI (153 aa)).

The protein belongs to the GST superfamily. Omega family. Homodimer.

The protein localises to the cytoplasm. It carries out the reaction RX + glutathione = an S-substituted glutathione + a halide anion + H(+). The enzyme catalyses L-dehydroascorbate + 2 glutathione = glutathione disulfide + L-ascorbate. In terms of biological role, active as '1-Cys' thiol transferase against beta-hydroxyethyl disulfide (HED), as dehydroascorbate reductase and as dimethylarsinic acid reductase, while not active against the standard GST substrate 1-chloro-2,4-dinitrobenzene (CDNB). May be involved in cell wall organization and biogenesis. This Saccharomyces cerevisiae (strain ATCC 204508 / S288c) (Baker's yeast) protein is Glutathione S-transferase omega-like 2.